The primary structure comprises 362 residues: 3-dehydroquinate synthase (362 aa).

Residues 71 to 76 (DGEQYK), 105 to 109 (GVVGD), 129 to 130 (TT), Lys142, Lys151, and 169 to 172 (CLKT) contribute to the NAD(+) site. Zn(2+) is bound by residues Glu184, His247, and His264.

Belongs to the sugar phosphate cyclases superfamily. Dehydroquinate synthase family. Requires Co(2+) as cofactor. It depends on Zn(2+) as a cofactor. The cofactor is NAD(+).

It is found in the cytoplasm. It carries out the reaction 7-phospho-2-dehydro-3-deoxy-D-arabino-heptonate = 3-dehydroquinate + phosphate. Its pathway is metabolic intermediate biosynthesis; chorismate biosynthesis; chorismate from D-erythrose 4-phosphate and phosphoenolpyruvate: step 2/7. Its function is as follows. Catalyzes the conversion of 3-deoxy-D-arabino-heptulosonate 7-phosphate (DAHP) to dehydroquinate (DHQ). The polypeptide is 3-dehydroquinate synthase (Shigella boydii serotype 18 (strain CDC 3083-94 / BS512)).